The primary structure comprises 729 residues: Transketolase (729 aa).

Histidine 97 serves as a coordination point for substrate. Residues histidine 138 and 186-188 (GPL) each bind thiamine diphosphate. Aspartate 227 contacts Mg(2+). Residues glycine 228 and asparagine 257 each contribute to the thiamine diphosphate site. Mg(2+) contacts are provided by asparagine 257 and isoleucine 259. 3 residues coordinate substrate: histidine 332, arginine 423, and serine 450. Histidine 332 provides a ligand contact to thiamine diphosphate. Glutamate 477 serves as the catalytic Proton donor. Phenylalanine 503 provides a ligand contact to thiamine diphosphate. Substrate is bound by residues histidine 527, aspartate 535, and arginine 586.

This sequence belongs to the transketolase family. Homodimer. Mg(2+) is required as a cofactor. Ca(2+) serves as cofactor. Requires Mn(2+) as cofactor. It depends on Co(2+) as a cofactor. The cofactor is thiamine diphosphate.

The catalysed reaction is D-sedoheptulose 7-phosphate + D-glyceraldehyde 3-phosphate = aldehydo-D-ribose 5-phosphate + D-xylulose 5-phosphate. Catalyzes the transfer of a two-carbon ketol group from a ketose donor to an aldose acceptor, via a covalent intermediate with the cofactor thiamine pyrophosphate. This chain is Transketolase (tkt), found in Streptococcus pyogenes serotype M18 (strain MGAS8232).